A 355-amino-acid chain; its full sequence is S-adenosylmethionine:tRNA ribosyltransferase-isomerase (355 aa).

The protein belongs to the QueA family. As to quaternary structure, monomer.

The protein localises to the cytoplasm. It carries out the reaction 7-aminomethyl-7-carbaguanosine(34) in tRNA + S-adenosyl-L-methionine = epoxyqueuosine(34) in tRNA + adenine + L-methionine + 2 H(+). The protein operates within tRNA modification; tRNA-queuosine biosynthesis. Its function is as follows. Transfers and isomerizes the ribose moiety from AdoMet to the 7-aminomethyl group of 7-deazaguanine (preQ1-tRNA) to give epoxyqueuosine (oQ-tRNA). This Photorhabdus laumondii subsp. laumondii (strain DSM 15139 / CIP 105565 / TT01) (Photorhabdus luminescens subsp. laumondii) protein is S-adenosylmethionine:tRNA ribosyltransferase-isomerase.